A 565-amino-acid chain; its full sequence is Proline--tRNA ligase (565 aa).

Belongs to the class-II aminoacyl-tRNA synthetase family. ProS type 1 subfamily. Homodimer.

The protein resides in the cytoplasm. It carries out the reaction tRNA(Pro) + L-proline + ATP = L-prolyl-tRNA(Pro) + AMP + diphosphate. Its function is as follows. Catalyzes the attachment of proline to tRNA(Pro) in a two-step reaction: proline is first activated by ATP to form Pro-AMP and then transferred to the acceptor end of tRNA(Pro). As ProRS can inadvertently accommodate and process non-cognate amino acids such as alanine and cysteine, to avoid such errors it has two additional distinct editing activities against alanine. One activity is designated as 'pretransfer' editing and involves the tRNA(Pro)-independent hydrolysis of activated Ala-AMP. The other activity is designated 'posttransfer' editing and involves deacylation of mischarged Ala-tRNA(Pro). The misacylated Cys-tRNA(Pro) is not edited by ProRS. The chain is Proline--tRNA ligase from Lactobacillus delbrueckii subsp. bulgaricus (strain ATCC 11842 / DSM 20081 / BCRC 10696 / JCM 1002 / NBRC 13953 / NCIMB 11778 / NCTC 12712 / WDCM 00102 / Lb 14).